A 1350-amino-acid polypeptide reads, in one-letter code: Nicotinate hydroxylase hnxS (1350 aa).

[2Fe-2S] cluster contacts are provided by cysteine 49, cysteine 54, cysteine 89, cysteine 92, cysteine 133, and cysteine 135. The interval 164–193 (LVGTEEETESDMGAHSGSGDTGSRSSGSCG) is disordered. Over residues 180–192 (GSGDTGSRSSGSC) the composition is skewed to low complexity. In terms of domain architecture, FAD-binding PCMH-type spans 256-445 (YGDAEQAWVK…TKIAVPMPSK (190 aa)). Residues 284–291 (LVTGASEV), 379–383 (CLAGN), aspartate 392, and lysine 455 contribute to the FAD site. Mo-molybdopterin is bound by residues glutamine 793 and phenylalanine 824. Glutamate 828 and arginine 906 together coordinate substrate. 2 residues coordinate Mo-molybdopterin: arginine 938 and alanine 1107. Glutamate 1281 serves as the catalytic Proton acceptor.

This sequence belongs to the xanthine dehydrogenase family. [2Fe-2S] cluster serves as cofactor. Requires FAD as cofactor. Mo-molybdopterin is required as a cofactor.

Its activity is regulated as follows. Allopurinol inhibits catalytic activity in a linear fashion. Nicotinate hydroxylase, part of the hnx cluster involved in the purine degradation. The nicotinate hydroxylase hnxS accepts nicotinate as a substrate and catalyzes the first step of nicotinate catabolism. HnxS also accepts hypoxanthine, but not xanthine, as a substrate. The major facilitator-type transporters hxnP and hxnZ are probably involved in the uptake of nicotinate-derived metabolites, and the oxidoreductases hxnT and hxnY in the further metabolism of 6-OH nicotinic acid. The polypeptide is Nicotinate hydroxylase hnxS (Emericella nidulans (strain FGSC A4 / ATCC 38163 / CBS 112.46 / NRRL 194 / M139) (Aspergillus nidulans)).